We begin with the raw amino-acid sequence, 726 residues long: Delta-1-pyrroline-5-carboxylate synthase B (726 aa).

A glutamate 5-kinase region spans residues 1–296 (MTEIDRSRAF…WAPVVDTTSR (296 aa)). Ser-60, Asp-157, and Asn-176 together coordinate substrate. Residues 196–197 (SD) and 236–242 (RGGMTAK) contribute to the ATP site. A gamma-glutamyl phosphate reductase region spans residues 297 to 717 (DMAVAARESS…YTHKDLPVLQ (421 aa)).

In the N-terminal section; belongs to the glutamate 5-kinase family. This sequence in the C-terminal section; belongs to the gamma-glutamyl phosphate reductase family.

The enzyme catalyses L-glutamate + ATP = L-glutamyl 5-phosphate + ADP. It carries out the reaction L-glutamate 5-semialdehyde + phosphate + NADP(+) = L-glutamyl 5-phosphate + NADPH + H(+). Its pathway is amino-acid biosynthesis; L-proline biosynthesis; L-glutamate 5-semialdehyde from L-glutamate: step 1/2. It functions in the pathway amino-acid biosynthesis; L-proline biosynthesis; L-glutamate 5-semialdehyde from L-glutamate: step 2/2. Its function is as follows. P5CS plays a key role in proline biosynthesis, leading to osmoregulation in plants. In Arabidopsis thaliana (Mouse-ear cress), this protein is Delta-1-pyrroline-5-carboxylate synthase B (P5CSB).